Here is a 416-residue protein sequence, read N- to C-terminus: Transcription termination factor Rho (416 aa).

Positions 51–121 (LIYSYGELDI…LKLIYVNGEK (71 aa)) constitute a Rho RNA-BD domain. Residues 162–167 (GKGQRG), 174–179 (KAGKTT), and Arg205 each bind ATP.

It belongs to the Rho family. Homohexamer. The homohexamer assembles into an open ring structure.

Functionally, facilitates transcription termination by a mechanism that involves Rho binding to the nascent RNA, activation of Rho's RNA-dependent ATPase activity, and release of the mRNA from the DNA template. The chain is Transcription termination factor Rho from Streptobacillus moniliformis (strain ATCC 14647 / DSM 12112 / NCTC 10651 / 9901).